The primary structure comprises 1052 residues: MATATATSERFELAKHCSSRNWSKAIRVLDSLLAKESSILDICNRAFCYNQLELHKHVIKDCDKALLLEPFAIQAFILKGRALLALGRKQEAVLVLEQGYKSALQQTADVKQLLELEELLKDARREIDGILKSHATESPQETPAYHSEKSDEKSDKLDNHESGASSNGNSHESSSELGEQSKIVSFSKVASKASKQSDGNSDLCNGSVYKEKENGKCGSQINGYYESCKPCNGSDLHDNLAESSDRFGELSINGNKISIKSSKMSHKAEARCGISDESRKNKKYTIARISGTHSISVDFRLSRGIAQVNEGNYTKAISIFDKVLKEEPTYPEALIGRGTAYAFQRELESAIADFTKAIQSNPAASEAWKRRGQARAALGEYVEAVEDLTKALVFEPNSPDVLHERGIVNFKSKDFTAAVKDLSICLKQEKDNKSAYTYLGLAFASLGEYKKAEEAHLKSIQLDSNYLEAWLHLAQFYQELADHCKALECIEQVLQVDNRVWKAYHLRGLVFHGLGEHRKAIQELSIGLSIENTIECLYLRGSCYHAVGEYRDAVKDYDATVDVELDAVEKFVLQCLAFYQKELALYTASKVSSEFLCFDIDGDIDPMFKEYWCKRLHPKNVCEKVYRQPPLRESLKKGKLKKQDLAITKQKANILRFADLIGKRIQYDCPGFLPNKRQHRMAGLAVIEIAQKVSKAWRIEWRNSTKGTTKNGKKNRRRERTNILSQNRGGAGCSSSSFSETSTGYASLEDRSSGRSILSWQDVYSPAVRWRQISEPCDPVVWVNKLSEEFNSGFGSHTPMVLGQAKVVRYFPNYERTLTLAKSIIKDKLSVRSKKDKVIDLSKDEKIEKIMRAETCDELHNIVGEDFWVATWCDSTGSEGKRLEGTRITCIQKPGRLGYDFSIRTPCTPARWSDFDEEMTSAWEALCTAYCGENYGSTELDALETVRDAILRMTYYWYNFMPLARGTAVTGFVVLLGLLLAANMEFTETIPKGLQIDWEAILNVEPGSFVDSVKSWLYPSLKINTSWRDHTEISSAFSTTGAVVAALSTYND.

Ala-2 carries the post-translational modification N-acetylalanine. TPR repeat units lie at residues 39 to 72 and 74 to 106; these read ILDI…EPFA and QAFI…ALQQ. A coiled-coil region spans residues 107-136; that stretch reads TADVKQLLELEELLKDARREIDGILKSHAT. The tract at residues 131–181 is disordered; it reads LKSHATESPQETPAYHSEKSDEKSDKLDNHESGASSNGNSHESSSELGEQS. Over residues 146–161 the composition is skewed to basic and acidic residues; it reads HSEKSDEKSDKLDNHE. The segment covering 162–181 has biased composition (low complexity); it reads SGASSNGNSHESSSELGEQS. TPR repeat units lie at residues 297–330, 331–364, 365–398, 400–432, 433–466, 468–500, 502–534, 535–567, and 569–591; these read VDFR…EPTY, PEAL…NPAA, SEAW…EPNS, DVLH…EKDN, KSAY…DSNY, EAWL…DNRV, KAYH…ENTI, ECLY…ELDA, and EKFV…ASKV. The segment at 704-739 is disordered; it reads STKGTTKNGKKNRRRERTNILSQNRGGAGCSSSSFS. A helical transmembrane segment spans residues 966-986; the sequence is GTAVTGFVVLLGLLLAANMEF.

Multimer. Interacts with EDS1. Interacts with SNC1 and RPS4. Interacts (via TPR domain) with SGT1 (via TPR domain). Interacts with the TCP transcription factors TCP8, TCP14, TCP15, TCP20, TCP22 and TCP23. In terms of tissue distribution, ubiquitous. Not detected in very young flowers and older siliques.

It is found in the nucleus. Its subcellular location is the cytoplasm. The protein localises to the perinuclear region. The protein resides in the membrane. It localises to the microsome. In terms of biological role, negative regulator of effector-triggered immunity associated with the EDS1 resistance pathway. May localize its interactors to a microsomal membrane. May therefore negatively regulate RPS4 and SNC1 translocation to the nucleus. Contributes to the regulation of RPS2 and RPS4 protein levels and negatively regulates SNC1 stability. This Arabidopsis thaliana (Mouse-ear cress) protein is Suppressor of RPS4-RLD 1.